A 249-amino-acid chain; its full sequence is Ribonuclease PH (249 aa).

Residues Arg86 and 124 to 126 each bind phosphate; that span reads GTR.

The protein belongs to the RNase PH family. As to quaternary structure, homohexameric ring arranged as a trimer of dimers.

It catalyses the reaction tRNA(n+1) + phosphate = tRNA(n) + a ribonucleoside 5'-diphosphate. Functionally, phosphorolytic 3'-5' exoribonuclease that plays an important role in tRNA 3'-end maturation. Removes nucleotide residues following the 3'-CCA terminus of tRNAs; can also add nucleotides to the ends of RNA molecules by using nucleoside diphosphates as substrates, but this may not be physiologically important. Probably plays a role in initiation of 16S rRNA degradation (leading to ribosome degradation) during starvation. The sequence is that of Ribonuclease PH from Clostridium botulinum (strain Eklund 17B / Type B).